The primary structure comprises 60 residues: Potassium channel toxin alpha-KTx 15.8 (60 aa).

The N-terminal stretch at Met-1 to Cys-22 is a signal peptide. Gln-23 carries the post-translational modification Pyrrolidone carboxylic acid. 3 cysteine pairs are disulfide-bonded: Cys-30-Cys-50, Cys-35-Cys-55, and Cys-39-Cys-57.

This sequence belongs to the short scorpion toxin superfamily. Potassium channel inhibitor family. Alpha-KTx 15 subfamily. As to expression, expressed by the venom gland.

It is found in the secreted. In terms of biological role, blocker of A-type voltage-gated potassium channels of cerebellar granular cells. May also inhibit Kv4/KCND when coexpressed with DPP6 or DPP10. The occlusion of the outer entry of the K(+) conducting pore is partially reversible and affects both open and closed channels. It shares the same target in rat brain than BmTX3 (AC Q8I0L5) and AmmTX3 (AC P60208). Also shows a weak inhibition on Kv1.2/KCNA2 and Kv1.3/KCNA3 voltage-gated potassium channels. This chain is Potassium channel toxin alpha-KTx 15.8, found in Olivierus martensii (Manchurian scorpion).